The following is a 212-amino-acid chain: Large ribosomal subunit protein bL25 (212 aa).

The tract at residues 183-212 (HDLPVASIHKPKGAKADDAEGEEGEEGGEE) is disordered. A compositionally biased stretch (acidic residues) spans 201–212 (AEGEEGEEGGEE).

This sequence belongs to the bacterial ribosomal protein bL25 family. CTC subfamily. Part of the 50S ribosomal subunit; part of the 5S rRNA/L5/L18/L25 subcomplex. Contacts the 5S rRNA. Binds to the 5S rRNA independently of L5 and L18.

In terms of biological role, this is one of the proteins that binds to the 5S RNA in the ribosome where it forms part of the central protuberance. This is Large ribosomal subunit protein bL25 from Marinobacter nauticus (strain ATCC 700491 / DSM 11845 / VT8) (Marinobacter aquaeolei).